We begin with the raw amino-acid sequence, 45 residues long: Sperm-specific protein Phi-3 (45 aa).

The segment at 1–45 (AKAKRSPRKKKAAVKKSSKSKAKKPKSPKKKKAAKKPAKKAAKKK) is disordered.

It is found in the nucleus. The protein resides in the chromosome. Involved in nuclear basic protein transition: histones are replaced by spermatid specific proteins which are themselves replaced by protamines in late spermatids. This Mytilus californianus (California mussel) protein is Sperm-specific protein Phi-3.